The following is a 265-amino-acid chain: HUWE1-associated protein modifying stress responses (265 aa).

Disordered stretches follow at residues M1 to S22, R145 to V170, V195 to G218, and G240 to I265. Composition is skewed to polar residues over residues V156–V170 and V195–T212.

It belongs to the HAPSTR1 family. In terms of assembly, oligomer.

The protein resides in the nucleus. It is found in the cytoplasm. Its function is as follows. Acts as a central player within a network of stress response pathways promoting cellular adaptability. Functions as a negative regulator of TP53/P53 in the cellular response to telomere erosion and probably also DNA damage. This Xenopus tropicalis (Western clawed frog) protein is HUWE1-associated protein modifying stress responses.